The primary structure comprises 326 residues: Sucrose operon repressor (326 aa).

Positions 1–57 (MKPKLNDVAKLAGVSATTVSRVINNHGYLSSQTKEKVFAAMRELHYQPNNMARSLQG) constitute an HTH lacI-type domain. Positions 5-24 (LNDVAKLAGVSATTVSRVIN) form a DNA-binding region, H-T-H motif.

Functionally, negative regulator of scrB expression. The protein is Sucrose operon repressor (scrR) of Pediococcus pentosaceus.